Reading from the N-terminus, the 272-residue chain is NH(3)-dependent NAD(+) synthetase (272 aa).

Residue 45–52 participates in ATP binding; it reads GISGGQDS. Asp-51 contacts Mg(2+). Arg-138 serves as a coordination point for deamido-NAD(+). ATP is bound at residue Thr-158. Glu-163 contributes to the Mg(2+) binding site. Residues Lys-171 and Asp-178 each coordinate deamido-NAD(+). ATP is bound by residues Lys-187 and Thr-209. 258-259 serves as a coordination point for deamido-NAD(+); it reads HK.

This sequence belongs to the NAD synthetase family. As to quaternary structure, homodimer.

It catalyses the reaction deamido-NAD(+) + NH4(+) + ATP = AMP + diphosphate + NAD(+) + H(+). It functions in the pathway cofactor biosynthesis; NAD(+) biosynthesis; NAD(+) from deamido-NAD(+) (ammonia route): step 1/1. Catalyzes the ATP-dependent amidation of deamido-NAD to form NAD. Uses ammonia as a nitrogen source. This chain is NH(3)-dependent NAD(+) synthetase, found in Bacillus licheniformis (strain ATCC 14580 / DSM 13 / JCM 2505 / CCUG 7422 / NBRC 12200 / NCIMB 9375 / NCTC 10341 / NRRL NRS-1264 / Gibson 46).